The primary structure comprises 445 residues: Glutamyl-tRNA reductase (445 aa).

Residues 49-52 (TCNR), Ser-109, 114-116 (ETQ), and Gln-120 contribute to the substrate site. Cys-50 (nucleophile) is an active-site residue. 189–194 (GAGEMS) contacts NADP(+).

It belongs to the glutamyl-tRNA reductase family. In terms of assembly, homodimer.

It carries out the reaction (S)-4-amino-5-oxopentanoate + tRNA(Glu) + NADP(+) = L-glutamyl-tRNA(Glu) + NADPH + H(+). It functions in the pathway porphyrin-containing compound metabolism; protoporphyrin-IX biosynthesis; 5-aminolevulinate from L-glutamyl-tRNA(Glu): step 1/2. Functionally, catalyzes the NADPH-dependent reduction of glutamyl-tRNA(Glu) to glutamate 1-semialdehyde (GSA). In Staphylococcus carnosus (strain TM300), this protein is Glutamyl-tRNA reductase.